Here is a 435-residue protein sequence, read N- to C-terminus: MNQIRQAPATSASNATESKQEIRNYTMNFGPQHPAAHGVLRLILEMDGETVVRADPHIGLLHRGTEKLAESKPFNQSIGYMDRLDYVSMMCNEHAYVRAIETLIGIQAPERAQYIRTMFDEITRILNHLMWLGSNALDLGAMAVMLYAFREREELMDVYEAISGARMHAAYYRPGGVYRDLPDTMPKYKQSRWHKGKALKRLNAAREGSMLDFLEHFADTFPQRIDEYETLLTDNRIWKQRTVGVGVIEPDVAKAWGMTGVMLRGSGVAWDLRKKQPYAKYDAVDFDIPLGTCGDCYDRYLCRVAEMRESNRIIKQCVQWLKVNPGQVMVENFKVAPPKRESMKDDMEALIHHFKLFSEGYCVPAGETYSAVEAPKGEFGCYLISDGANKPFRVHLRAPGFAHLSSMDAVVRGYMLADVVAMIGTYDLVFGEVDR.

Belongs to the complex I 49 kDa subunit family. As to quaternary structure, NDH-1 is composed of 14 different subunits. Subunits NuoB, C, D, E, F, and G constitute the peripheral sector of the complex.

Its subcellular location is the cell inner membrane. It carries out the reaction a quinone + NADH + 5 H(+)(in) = a quinol + NAD(+) + 4 H(+)(out). Functionally, NDH-1 shuttles electrons from NADH, via FMN and iron-sulfur (Fe-S) centers, to quinones in the respiratory chain. The immediate electron acceptor for the enzyme in this species is believed to be ubiquinone. Couples the redox reaction to proton translocation (for every two electrons transferred, four hydrogen ions are translocated across the cytoplasmic membrane), and thus conserves the redox energy in a proton gradient. The sequence is that of NADH-quinone oxidoreductase subunit D from Xylella fastidiosa (strain 9a5c).